A 62-amino-acid chain; its full sequence is Short neurotoxin 1 (62 aa).

The interval 1 to 20 (LECHNQQSSEPPTTTRCSGG) is disordered. Disulfide bonds link Cys3/Cys24, Cys17/Cys41, Cys43/Cys54, and Cys55/Cys60.

The protein belongs to the three-finger toxin family. Short-chain subfamily. Type I alpha-neurotoxin sub-subfamily. As to expression, expressed by the venom gland.

The protein localises to the secreted. In terms of biological role, binds to muscle nicotinic acetylcholine receptor (nAChR) and inhibit acetylcholine from binding to the receptor, thereby impairing neuromuscular transmission. This chain is Short neurotoxin 1, found in Naja mossambica (Mozambique spitting cobra).